We begin with the raw amino-acid sequence, 850 residues long: MRQVCCSALPPPPLEKGRCSSYSDSSSSSSERSSSSSSSSSESGSSSRSSSNNSSISRPAAPPEPRPQQQPQPRSPAARRAAARSRAAAAGGMRRDPAPGFSMLLFGVSLACYSPSLKSVQDQAYKAPVVVEGKVQGLVPAGGSSSNSTREPPASGRVALVKVLDKWPLRSGGLQREQVISVGSCVPLERNQRYIFFLEPTEQPLVFKTAFAPLDTNGKNLKKEVGKILCTDCATRPKLKKMKSQTGQVGEKQSLKCEAAAGNPQPSYRWFKDGKELNRSRDIRIKYGNGRKNSRLQFNKVKVEDAGEYVCEAENILGKDTVRGRLYVNSVSTTLSSWSGHARKCNETAKSYCVNGGVCYYIEGINQLSCKCPNGFFGQRCLEKLPLRLYMPDPKQKAEELYQKRVLTITGICVALLVVGIVCVVAYCKTKKQRKQMHNHLRQNMCPAHQNRSLANGPSHPRLDPEEIQMADYISKNVPATDHVIRRETETTFSGSHSCSPSHHCSTATPTSSHRHESHTWSLERSESLTSDSQSGIMLSSVGTSKCNSPACVEARARRAAAYNLEERRRATAPPYHDSVDSLRDSPHSERYVSALTTPARLSPVDFHYSLATQVPTFEITSPNSAHAVSLPPAAPISYRLAEQQPLLRHPAPPGPGPGPGPGPGPGADMQRSYDSYYYPAAGPGPRRGTCALGGSLGSLPASPFRIPEDDEYETTQECAPPPPPRPRARGASRRTSAGPRRWRRSRLNGLAAQRARAARDSLSLSSGSGGGSASASDDDADDADGALAAESTPFLGLRGAHDALRSDSPPLCPAADSRTYYSLDSHSTRASSRHSRGPPPRAKQDSAPL.

The tract at residues 1-96 (MRQVCCSALP…AAAAGGMRRD (96 aa)) is disordered. The propeptide occupies 1 to 111 (MRQVCCSALP…SMLLFGVSLA (111 aa)). Over residues 20–59 (SSYSDSSSSSSERSSSSSSSSSESGSSSRSSSNNSSISRP) the composition is skewed to low complexity. N-linked (GlcNAc...) asparagine glycosylation is found at asparagine 52 and asparagine 53. The segment covering 60–74 (AAPPEPRPQQQPQPR) has biased composition (pro residues). Low complexity predominate over residues 75–92 (SPAARRAAARSRAAAAGG). The Extracellular segment spans residues 112 to 405 (CYSPSLKSVQ…QKAEELYQKR (294 aa)). N-linked (GlcNAc...) asparagine glycosylation is found at asparagine 147, asparagine 278, and asparagine 346. In terms of domain architecture, Ig-like C2-type spans 237–332 (PKLKKMKSQT…RGRLYVNSVS (96 aa)). 4 cysteine pairs are disulfide-bonded: cysteine 257/cysteine 311, cysteine 345/cysteine 359, cysteine 353/cysteine 370, and cysteine 372/cysteine 381. The EGF-like domain maps to 341 to 382 (HARKCNETAKSYCVNGGVCYYIEGINQLSCKCPNGFFGQRCL). A helical transmembrane segment spans residues 406 to 426 (VLTITGICVALLVVGIVCVVA). The Cytoplasmic segment spans residues 427–850 (YCKTKKQRKQ…PRAKQDSAPL (424 aa)). Disordered regions lie at residues 492 to 535 (TFSG…DSQS), 566 to 585 (EERR…SLRD), 647 to 681 (LLRH…YYPA), 700 to 788 (LPAS…DGAL), and 801 to 850 (AHDA…SAPL). A compositionally biased stretch (low complexity) spans 494–506 (SGSHSCSPSHHCS). The segment covering 514–527 (HRHESHTWSLERSE) has biased composition (basic and acidic residues). The segment covering 651–665 (PAPPGPGPGPGPGPG) has biased composition (pro residues). The segment covering 750–767 (GLAAQRARAARDSLSLSS) has biased composition (low complexity).

It belongs to the neuregulin family. Interacts with ERBB3 and ERBB4. Post-translationally, proteolytic cleavage close to the plasma membrane on the external face leads to the release of the soluble growth factor form. Extensive glycosylation precedes the proteolytic cleavage. As to expression, restricted to the cerebellum in the adult.

It localises to the cell membrane. The protein resides in the secreted. Its function is as follows. Direct ligand for ERBB3 and ERBB4 tyrosine kinase receptors. Concomitantly recruits ERBB1 and ERBB2 coreceptors, resulting in ligand-stimulated tyrosine phosphorylation and activation of the ERBB receptors. May also promote the heterodimerization with the EGF receptor. The sequence is that of Pro-neuregulin-2, membrane-bound isoform (NRG2) from Homo sapiens (Human).